Consider the following 840-residue polypeptide: Homeobox-leucine zipper protein HOX9 (840 aa).

2 disordered regions span residues 1–26 (MAAA…AGMD) and 135–160 (NPSL…DASN). Residues 12 to 21 (GSDGGGGGYD) show a composition bias toward gly residues. A DNA-binding region (homeobox) is located at residues 26-89 (DSGKYVRYTP…NRRCRDKQRK (64 aa)). A coiled-coil region spans residues 86-135 (KQRKEASRLQAVNRKLTAMNKLLMEENERLQKQVSQLVHENAYMKQQLQN). Residues 157 to 385 (DASNPSGLLT…IAQETSGEVV (229 aa)) enclose the START domain.

It belongs to the HD-ZIP homeobox family. Class III subfamily. As to expression, expressed in seedlings, roots, stems, leaf sheaths and blades and panicles.

Its subcellular location is the nucleus. Functionally, probable transcription factor. This chain is Homeobox-leucine zipper protein HOX9 (HOX9), found in Oryza sativa subsp. indica (Rice).